We begin with the raw amino-acid sequence, 79 residues long: Small ribosomal subunit protein bS18 (79 aa).

It belongs to the bacterial ribosomal protein bS18 family. In terms of assembly, part of the 30S ribosomal subunit. Forms a tight heterodimer with protein bS6.

Binds as a heterodimer with protein bS6 to the central domain of the 16S rRNA, where it helps stabilize the platform of the 30S subunit. In Streptococcus agalactiae serotype Ia (strain ATCC 27591 / A909 / CDC SS700), this protein is Small ribosomal subunit protein bS18.